Here is a 307-residue protein sequence, read N- to C-terminus: Methionyl-tRNA formyltransferase (307 aa).

110–113 (SLLP) provides a ligand contact to (6S)-5,6,7,8-tetrahydrofolate.

It belongs to the Fmt family.

The enzyme catalyses L-methionyl-tRNA(fMet) + (6R)-10-formyltetrahydrofolate = N-formyl-L-methionyl-tRNA(fMet) + (6S)-5,6,7,8-tetrahydrofolate + H(+). Its function is as follows. Attaches a formyl group to the free amino group of methionyl-tRNA(fMet). The formyl group appears to play a dual role in the initiator identity of N-formylmethionyl-tRNA by promoting its recognition by IF2 and preventing the misappropriation of this tRNA by the elongation apparatus. The chain is Methionyl-tRNA formyltransferase from Chromobacterium violaceum (strain ATCC 12472 / DSM 30191 / JCM 1249 / CCUG 213 / NBRC 12614 / NCIMB 9131 / NCTC 9757 / MK).